A 397-amino-acid polypeptide reads, in one-letter code: Mesoderm posterior protein 2 (397 aa).

4 disordered regions span residues 28 to 92, 152 to 208, 222 to 295, and 351 to 376; these read WDST…REKL, QRGD…GRRP, SPSA…VPWT, and PNSE…SGLR. Composition is skewed to low complexity over residues 32–48 and 58–71; these read SPAS…CDGA and SCSS…ATTP. A bHLH domain is found at 81 to 135; it reads GQRQSASEREKLRMRTLARALHELRRFLPPSLAPAGQSLTKIETLRLAIRYIGHL. A run of 13 repeats spans residues 179 to 180, 181 to 182, 183 to 184, 185 to 186, 187 to 188, 189 to 190, 191 to 192, 193 to 194, 195 to 196, 197 to 198, 199 to 200, 201 to 202, and 203 to 204. Positions 179 to 204 are 13 X 2 AA tandem repeats of G-Q; the sequence is GQGQGQGQGQGQGQGQGQGQGQGQGQ. A compositionally biased stretch (gly residues) spans 180–206; sequence QGQGQGQGQGQGQGQGQGQGQGQGQGR. The segment covering 235–244 has biased composition (basic and acidic residues); sequence RLGRGVHDTD. Polar residues-rich tracts occupy residues 258–270 and 365–375; these read PPYS…SDAS and SEASPPQSSGL.

In terms of processing, degraded by the proteasome.

It localises to the nucleus. Its function is as follows. Transcription factor with important role in somitogenesis. Defines the rostrocaudal patterning of the somite by participating in distinct Notch pathways. Also regulates the FGF signaling pathway. Specifies the rostral half of the somites. Generates rostro-caudal polarity of somites by down-regulating in the presumptive rostral domain DLL1, a Notch ligand. Participates in the segment border formation by activating in the anterior presomitic mesoderm LFNG, a negative regulator of DLL1-Notch signaling. Acts as a strong suppressor of Notch activity. Together with MESP1 is involved in the epithelialization of somitic mesoderm and in the development of cardiac mesoderm. The polypeptide is Mesoderm posterior protein 2 (MESP2) (Homo sapiens (Human)).